Consider the following 310-residue polypeptide: Olfactory receptor 2A1/2A42 (310 aa).

Residues 1-24 (MGENQTMVTEFLLLGFLLGPRIQM) are Extracellular-facing. Asn-4 is a glycosylation site (N-linked (GlcNAc...) asparagine). The helical transmembrane segment at 25 to 48 (LLFGLFSLFYIFTLLGNGAILGLI) threads the bilayer. The Cytoplasmic segment spans residues 49–56 (SLDSRLHT). A helical transmembrane segment spans residues 57-78 (PMYFFLSHLAVVDIAYTRNTVP). The Extracellular portion of the chain corresponds to 79–99 (QMLANLLHPAKPISFAGCMTQ). Cys-96 and Cys-188 are oxidised to a cystine. The chain crosses the membrane as a helical span at residues 100 to 119 (TFLCLSFGHSECLLLVLMSY). At 120-138 (DRYVAICHPLRYSVIMTWR) the chain is on the cytoplasmic side. A helical membrane pass occupies residues 139-157 (VCITLAVTSWTCGSLLALA). At 158–195 (HVVLILRLPFSGPHEINHFFCEILSVLRLACADTWLNQ) the chain is on the extracellular side. The chain crosses the membrane as a helical span at residues 196–218 (VVIFAACVFFLVGPPSLVLVSYS). Over 219-235 (HILAAILRIQSGEGRRK) the chain is Cytoplasmic. The helical transmembrane segment at 236-258 (AFSTCSSHLCVVGLFFGSAIIMY) threads the bilayer. The Extracellular portion of the chain corresponds to 259–271 (MAPKSRHPEEQQK). A helical transmembrane segment spans residues 272–291 (VFFLFYSFFNPTLNPLIYSL). The Cytoplasmic segment spans residues 292-310 (RNGEVKGALRRALGKESHS).

Belongs to the G-protein coupled receptor 1 family.

It localises to the cell membrane. Its function is as follows. Odorant receptor. This is Olfactory receptor 2A1/2A42 (OR2A1) from Homo sapiens (Human).